Reading from the N-terminus, the 438-residue chain is GDP-mannose 6-dehydrogenase (438 aa).

NAD(+) contacts are provided by Tyr10, Val11, Asp30, Lys35, Thr86, and Thr124. Residues Glu161, Lys210, Asn214, His217, Asn225, Tyr256, Tyr257, Arg259, Phe262, and Gly265 each coordinate GDP-alpha-D-mannuronate. Cys268 is an active-site residue. Lys271 provides a ligand contact to NAD(+). Lys324 contributes to the GDP-alpha-D-mannuronate binding site. Arg331 contributes to the NAD(+) binding site.

This sequence belongs to the UDP-glucose/GDP-mannose dehydrogenase family.

It carries out the reaction GDP-alpha-D-mannose + 2 NAD(+) + H2O = GDP-alpha-D-mannuronate + 2 NADH + 3 H(+). It participates in glycan biosynthesis; alginate biosynthesis. Functionally, catalyzes the oxidation of guanosine diphospho-D-mannose (GDP-D-mannose) to GDP-D-mannuronic acid, a precursor for alginate polymerization. The alginate layer causes a mucoid phenotype and provides a protective barrier against host immune defenses and antibiotics. This Pseudomonas syringae pv. tomato (strain ATCC BAA-871 / DC3000) protein is GDP-mannose 6-dehydrogenase (algD).